Consider the following 521-residue polypeptide: U4/U6 small nuclear ribonucleoprotein Prp4 (521 aa).

At Lys26 the chain carries N6-acetyllysine. WD repeat units follow at residues 228 to 267 (GDDR…LLHT), 270 to 317 (GHNT…PVAD), 320 to 359 (GHTV…EILH), 362 to 401 (GHSM…CIMF), 404 to 443 (GHLK…CVYT), 446 to 486 (AHQN…PLKT), and 489 to 521 (GHEG…WMAE).

In terms of assembly, component of the precatalytic spliceosome (spliceosome B complex). Component of the U4/U6-U5 tri-snRNP complex, a building block of the precatalytic spliceosome (spliceosome B complex). The U4/U6-U5 tri-snRNP complex is composed of the U4, U6 and U5 snRNAs and at least PRPF3, PRPF4, PRPF6, PRPF8, PRPF31, SNRNP200, TXNL4A, SNRNP40, SNRPB, SNRPD1, SNRPD2, SNRPD3, SNRPE, SNRPF, SNRPG, DDX23, CD2BP2, PPIH, SNU13, EFTUD2, SART1 and USP39, plus LSM2, LSM3, LSM4, LSM5, LSM6, LSM7 and LSM8. Interacts directly with PRPF18, PPIH and PRPF3. Part of a heteromeric complex containing PPIH, PRPF3 and PRPF4 that is stable in the absence of RNA. Interacts with ERCC6.

Its subcellular location is the nucleus. The protein localises to the nucleus speckle. In terms of biological role, plays a role in pre-mRNA splicing as component of the U4/U6-U5 tri-snRNP complex that is involved in spliceosome assembly, and as component of the precatalytic spliceosome (spliceosome B complex). The sequence is that of U4/U6 small nuclear ribonucleoprotein Prp4 (PRPF4) from Pongo abelii (Sumatran orangutan).